A 159-amino-acid polypeptide reads, in one-letter code: NADH-quinone oxidoreductase subunit B (159 aa).

[4Fe-4S] cluster-binding residues include C37, C38, C102, and C132.

It belongs to the complex I 20 kDa subunit family. As to quaternary structure, NDH-1 is composed of 14 different subunits. Subunits NuoB, C, D, E, F, and G constitute the peripheral sector of the complex. It depends on [4Fe-4S] cluster as a cofactor.

The protein localises to the cell inner membrane. The catalysed reaction is a quinone + NADH + 5 H(+)(in) = a quinol + NAD(+) + 4 H(+)(out). NDH-1 shuttles electrons from NADH, via FMN and iron-sulfur (Fe-S) centers, to quinones in the respiratory chain. Couples the redox reaction to proton translocation (for every two electrons transferred, four hydrogen ions are translocated across the cytoplasmic membrane), and thus conserves the redox energy in a proton gradient. The protein is NADH-quinone oxidoreductase subunit B of Ruthia magnifica subsp. Calyptogena magnifica.